The primary structure comprises 88 residues: Stannin (88 aa).

Residues 1–10 (MSIMDHSPTT) are Mitochondrial intermembrane-facing. The helical transmembrane segment at 11–31 (GVVTVIVILIAIAALGALILG) threads the bilayer. At 32–88 (CWCYLRLQRISQSEDEESIVGDGETKEPFLLVQYSAKGPCVERKAKLMTPNGPEVHG) the chain is on the cytoplasmic side. A Phosphoserine modification is found at Ser-49.

This sequence belongs to the stannin family. As to quaternary structure, monomer.

The protein resides in the mitochondrion outer membrane. Its function is as follows. Plays a role in the toxic effects of organotins. Plays a role in endosomal maturation. In Homo sapiens (Human), this protein is Stannin (SNN).